Here is a 472-residue protein sequence, read N- to C-terminus: MERPNPSVGGIYSGLHDNGPVENPAAEEEGLRLLAGAASARSGSSAGGGGGGGGGGEPEGRSGSSNGIVTEPDPEEGTSSGQRGEKRKLENDGADFLKELTLSLMSRCYPESVWWADLEDEFKNGNMNLLYKYGFEQLKTHWMEPWEDWELALNMFAKVALRPDTIYTIKKTVNIRKCAYVIGNGAVVRFQTFDRVVFNCAMQSLGPGVIGMSGVTFNNVRFAADGFNGKVFASTTQLTLHGVFFQNCSGVCVDSWGRVSARGCTFVGCWKGLVGQNKSQMSVKKCVFERCILAMVVEGQARIRHNAGSENVCFLLLKGTASVKHNMICGTGHSQLLTCADGNCQTLKVIHVVSHQRRPWPVFEHNMLMRCTMHLGARRGMFSPYQSNFCHTKVLMETDAFSRVWWSGVFDLTIELYKVVRYDELKARCRPCECGANHIRLYPATLNVTEQLRTDHQMLSCLRTDYESSDED.

Residues 1–90 (MERPNPSVGG…GQRGEKRKLE (90 aa)) are disordered. Positions 32-44 (RLLAGAASARSGS) are enriched in low complexity. The span at 45 to 57 (SAGGGGGGGGGGE) shows a compositional bias: gly residues. Phosphoserine occurs at positions 468 and 469.

The protein belongs to the adenoviridae E1B 55 kDa protein family. As to quaternary structure, interacts with host PML-4 and PML-5; this interaction promotes efficient subnuclear targeting of E1B-55K to PML nuclear bodies. Interacts with E4-ORF3 protein. Interacts with E4-ORF6 protein.

Its subcellular location is the host nucleus. It localises to the host cytoplasm. Functionally, plays a major role to prevent cellular inhibition of viral genome replication. Assembles an SCF-like E3 ubiquitin ligase complex based on the cellular proteins ELOB, ELOC, CUL5 and RBX1, in cooperation with viral E4orf6. This viral RING-type ligase ubiquitinates cellular substrates and targets them to proteasomal degradation: TP53/p53, LIG4, MRE11-RAD50-NBS1 (MRN) complex, ITGA3, DAXX and BLM. E1B-55K probably acts as the substrate-specific adapter of the SCF-like E3 ubiquitin ligase complex. Degradation of host TP53/p53 activity is essential for preventing E1A-induced TP53 accumulation that would otherwise lead to cell apoptosis and growth arrest. E1B-55K also inactivates TP53 transcription-factor activity by binding its transactivation domain. E1B-55K also functions as a SUMO1 E3 ligase for TP53 which causes the latter to be sequestered in promyelocytic leukemia (PML) nuclear bodies thereby contributing to maximal inhibition of TP53 function. This Homo sapiens (Human) protein is E1B 55 kDa protein.